The following is a 103-amino-acid chain: Large ribosomal subunit protein bL21 (103 aa).

This sequence belongs to the bacterial ribosomal protein bL21 family. In terms of assembly, part of the 50S ribosomal subunit. Contacts protein L20.

Functionally, this protein binds to 23S rRNA in the presence of protein L20. The protein is Large ribosomal subunit protein bL21 of Verminephrobacter eiseniae (strain EF01-2).